Consider the following 328-residue polypeptide: Small neutral protease regulatory protein (328 aa).

Residues 1–60 form the HTH lysR-type domain; that stretch reads MELEVRHLRALCAIADAGSLHRAARRLGVAQPTLSTQLTRIEQALGGPLFTRERTGCRPT. Residues 20–39 constitute a DNA-binding region (H-T-H motif); that stretch reads LHRAARRLGVAQPTLSTQLT.

The protein belongs to the LysR transcriptional regulatory family.

Its function is as follows. Transcriptional trans-activator of the gene (mprA) for the small neutral protease. This is Small neutral protease regulatory protein (mprR) from Streptomyces coelicolor (strain ATCC BAA-471 / A3(2) / M145).